Reading from the N-terminus, the 1357-residue chain is MGFRELFASSLGDAARAKASLVRGMSGWLNTTLATVQAAGPEIRACAYSALWAEVDSVKELVPLSATMLLNQLRADLKCAQVRAQKCTPASTSRFCSCGGIPLPGENKWEDELVPIPDCPVGRNFCRDGVFCKRHHGPGETLERVQVLVEAPKCPHCQGTGIIPRSEPMAYIRSEYERQTKTFARPSNPLHEWILEEGRESNHARRCSNWYHMSMSQIDKRDNDPCDASTWMAAAQILFDNADAQVYYPGSNYRKLVGGSKGYDDWCQLPPSKEMCNRLFDWWHRQNTPDYYVSEDTLADFVKPRMGSCHLPIEHDVHLLPREWHGRVSAGNTSHFMACLDGLSSSMEEFLDVFYDCAAQFNGDIEIFLDTNEKPSRVVGNLGGVRVLLTTPAVCSPAKLLPEIEESDFDQLEDESISCDSMIPPLFRDNGLSALYANLVLKQATVQSILMAHPDQDEIEDQVDHLENKQGGEIVTTPAFIKMLKEKRKEVRGKEFAEGSEGRLVRASDLTLSREDVFLSGGLFEKFRKSGIVQTFKGKDPKLTKVCVDLTNSQEIIKYPSKEMCSDSSGVHTGQVFTVLNRPLYNELNKLAESGWKEAKSVCLNLHIRSYVPVHTPLYAFCVIMWGHSSDAETASLCGAGVYLGDQEAAVLELPLVCSYLGNSLEDFDAYKRSLVLSTVFFGKSGLFAGQNVFGITAVEFTEYMPTSYGGITHERDSWQAMLRNHQGKDKGRFIAGFNVVDALERDKEEPIKMPNLDLEPVPRTQPIVRTFTGEGKQPLLNKSRSMRIQSFVSFRGSNIPVGRRIDNTAEAINYELGRASTSSVSSRLDESKCNLKAGGSYAFGETIELPATVTPGTVLAVFNIFDKIQETNTKVCSKWLEQGYVSQNLTAISHLAPNAFSGIAIWYIFDAYGKIPGDVTTTFELEMARSFDPHVQVLRDVSTSTWVIDFHKICGQTLNFSGQGYCVPKIWVIAASTFQLARSTATKFRLEFYTRGEKLVRGLAEQPLSYPIEARHLTDLNLMLAPKQIAVGTYAMITFPVSLAAKLQSTSGRTAYSYAAGLLSHFLGVGGTIHFVVRTTSSAFVTSKLRIALWGTVPETDQLAQMPHVDVEVNVDASLQIQSPFFSTANFGNSGSAFYVSTLCAPMAPETVETGSEYYIQIKGIEANPGLCREINYKQRFAWCLLECLDNSKASPIKVKIPSRIGNLSSKHVKVTNFVNALAILCATTGMHHGNCTIHFSWLWHPAELGKQLGRLKFVQGMGINNEHIGDTMCYNSLSNTHSVPFQFGSFAGPITSGGKADEAENWIEIQSPDFSWVASLHVSIEVHEGFKFYGRSAGPLTIPATVADVSAVSGS.

The protein belongs to the nepoviruses RNA2 polyprotein family. Specific enzymatic cleavages in vivo by the P1 encoded 3C-like protease yield mature proteins.

Its subcellular location is the host cell junction. It localises to the host plasmodesma. It is found in the host cytoplasm. The protein localises to the host nucleus. The protein resides in the virion. Functionally, implicated in RNA2 replication. Could also be required for nematode transmission of the virus. Its function is as follows. Transports viral genome to neighboring plant cells directly through plasmosdesmata, without any budding. The movement protein allows efficient cell to cell propagation, by bypassing the host cell wall barrier. Acts by forming a tubular structure at the host plasmodesmata, enlarging it enough to allow free passage of virion capsids. The sequence is that of RNA2 polyprotein from Beet ringspot virus (BRSV).